A 270-amino-acid chain; its full sequence is 4-hydroxy-tetrahydrodipicolinate reductase (270 aa).

Residues 9-14 (GSGGRM) and Glu-35 each bind NAD(+). Residue Arg-36 coordinates NADP(+). Residues 99-101 (GTT) and 123-126 (ASNY) contribute to the NAD(+) site. His-156 serves as the catalytic Proton donor/acceptor. His-157 is a binding site for (S)-2,3,4,5-tetrahydrodipicolinate. Residue Lys-160 is the Proton donor of the active site. 166–167 (GT) contacts (S)-2,3,4,5-tetrahydrodipicolinate.

Belongs to the DapB family.

It is found in the cytoplasm. It catalyses the reaction (S)-2,3,4,5-tetrahydrodipicolinate + NAD(+) + H2O = (2S,4S)-4-hydroxy-2,3,4,5-tetrahydrodipicolinate + NADH + H(+). The catalysed reaction is (S)-2,3,4,5-tetrahydrodipicolinate + NADP(+) + H2O = (2S,4S)-4-hydroxy-2,3,4,5-tetrahydrodipicolinate + NADPH + H(+). The protein operates within amino-acid biosynthesis; L-lysine biosynthesis via DAP pathway; (S)-tetrahydrodipicolinate from L-aspartate: step 4/4. Catalyzes the conversion of 4-hydroxy-tetrahydrodipicolinate (HTPA) to tetrahydrodipicolinate. This chain is 4-hydroxy-tetrahydrodipicolinate reductase, found in Histophilus somni (strain 2336) (Haemophilus somnus).